Reading from the N-terminus, the 326-residue chain is Tetraacyldisaccharide 4'-kinase (326 aa).

55 to 62 (TAGGNGKT) contributes to the ATP binding site.

This sequence belongs to the LpxK family.

It catalyses the reaction a lipid A disaccharide + ATP = a lipid IVA + ADP + H(+). It participates in glycolipid biosynthesis; lipid IV(A) biosynthesis; lipid IV(A) from (3R)-3-hydroxytetradecanoyl-[acyl-carrier-protein] and UDP-N-acetyl-alpha-D-glucosamine: step 6/6. Functionally, transfers the gamma-phosphate of ATP to the 4'-position of a tetraacyldisaccharide 1-phosphate intermediate (termed DS-1-P) to form tetraacyldisaccharide 1,4'-bis-phosphate (lipid IVA). The sequence is that of Tetraacyldisaccharide 4'-kinase from Erwinia tasmaniensis (strain DSM 17950 / CFBP 7177 / CIP 109463 / NCPPB 4357 / Et1/99).